The chain runs to 641 residues: Macrolide export ATP-binding/permease protein MacB (641 aa).

Residues 2 to 240 enclose the ABC transporter domain; it reads IKLENIKKSF…LKQNLKEIKP (239 aa). 38-45 is an ATP binding site; the sequence is GQSGSGKS. Helical transmembrane passes span 268-288, 516-536, 565-585, and 601-621; these read FLTMLGIIIGIASVICVVALA, LLISGIALISLMVGGIGVMNI, FLIEAILLCAIGGSIGIGLAY, and IFSTASIFIALGVSSLIGIVF.

Belongs to the ABC transporter superfamily. Macrolide exporter (TC 3.A.1.122) family. In terms of assembly, homodimer.

It is found in the cell inner membrane. In terms of biological role, non-canonical ABC transporter that contains transmembrane domains (TMD), which form a pore in the inner membrane, and an ATP-binding domain (NBD), which is responsible for energy generation. Confers resistance against macrolides. The sequence is that of Macrolide export ATP-binding/permease protein MacB from Campylobacter fetus subsp. fetus (strain 82-40).